Consider the following 300-residue polypeptide: TLR adapter interacting with SLC15A4 on the lysosome (300 aa).

The pLxIS motif motif lies at 289–293; it reads SLHIS. S293 bears the Phosphoserine mark.

Interacts (via pLxIS motif) with IRF5; leading to IRF5 activation. Interacts with SLC15A4; leading to its recruitment to endolysosome. The phosphorylated pLxIS motif constitutes an IRF5-binding motif, leading to recruitment of the transcription factor IRF5 to induce type-I interferons and other cytokines.

It localises to the lysosome membrane. The protein localises to the endosome membrane. It is found in the nucleus. The protein resides in the cytoplasm. In terms of biological role, innate immune adapter that mediates the recruitment and activation of IRF5 downstream of endolysosomal toll-like receptors TLR7, TLR8 and TLR9. Following recruitment to endolysosome by SLC15A4 downstream of TLR7, TLR8 and TLR9, specifically recruits IRF5 transcription factor via its pLxIS motif, leading to IRF5 activation and subsequent expression of type I interferons. Plays a role in the regulation of endolysosomal pH in immune cells such as B-cells, dendritic cells and monocytes. This is TLR adapter interacting with SLC15A4 on the lysosome from Bos taurus (Bovine).